Consider the following 310-residue polypeptide: Transcriptional activator BRRF1 (310 aa).

This sequence belongs to the lymphocryptovirus BBRF1 family.

In terms of biological role, enhances the ability of BRLF1 to induce lytic infection by cooperating with it to transcriptionally activate the BZLF1 promoter. This chain is Transcriptional activator BRRF1, found in Epstein-Barr virus (strain AG876) (HHV-4).